A 212-amino-acid polypeptide reads, in one-letter code: ER lumen protein-retaining receptor 2 (212 aa).

Residues 1 to 4 lie on the Lumenal side of the membrane; that stretch reads MNIF. The chain crosses the membrane as a helical span at residues 5-24; it reads RLTGDLSHLAAIVILLLKIW. At 25-32 the chain is on the cytoplasmic side; sequence KTRSCAGI. Residues 33–52 traverse the membrane as a helical segment; sequence SGKSQLLFALVFTTRYLDLF. The segment at 47-48 is interaction with the K-D-E-L motif on target proteins; sequence RY. Topologically, residues 53 to 58 are lumenal; the sequence is TSFISL. A helical transmembrane segment spans residues 59–79; sequence YNTSMKLIYIACSYATVYLIY. Residues 80–92 lie on the Cytoplasmic side of the membrane; the sequence is MKFKATYDGNHDT. A helical membrane pass occupies residues 93–110; the sequence is FRVEFLVVPVGGLSFLVN. At 111 to 116 the chain is on the lumenal side; it reads HDFSPL. Residues 117 to 135 traverse the membrane as a helical segment; the sequence is EILWTFSIYLESVAILPQL. Topologically, residues 136 to 149 are cytoplasmic; the sequence is FMISKTGEAETITT. A helical transmembrane segment spans residues 150-168; sequence HYLFFLGLYRALYLVNWIW. Residues 159 to 169 are interaction with the K-D-E-L motif on target proteins; that stretch reads RALYLVNWIWR. Topologically, residues 169-178 are lumenal; that stretch reads RFYFEGFFDL. The chain crosses the membrane as a helical span at residues 179 to 199; the sequence is IAVVAGVVQTILYCDFFYLYI. Residues 200 to 212 lie on the Cytoplasmic side of the membrane; that stretch reads TKVLKGKKLSLPA. The tract at residues 204-207 is important for recycling of cargo proteins with the sequence motif K-D-E-L from the Golgi to the endoplasmic reticulum; it reads KGKK.

The protein belongs to the ERD2 family.

The protein resides in the endoplasmic reticulum membrane. Its subcellular location is the golgi apparatus membrane. It is found in the cytoplasmic vesicle. The protein localises to the COPI-coated vesicle membrane. Functionally, membrane receptor that binds the K-D-E-L sequence motif in the C-terminal part of endoplasmic reticulum resident proteins and maintains their localization in that compartment by participating to their vesicle-mediated recycling back from the Golgi. Binding is pH dependent, and is optimal at pH 5-5.4. The sequence is that of ER lumen protein-retaining receptor 2 (Kdelr2) from Mus musculus (Mouse).